Here is a 302-residue protein sequence, read N- to C-terminus: tRNA dimethylallyltransferase 1 (302 aa).

Glycine 6–threonine 13 contributes to the ATP binding site. Threonine 8–threonine 13 lines the substrate pocket. Interaction with substrate tRNA regions lie at residues aspartate 31–glutamine 34 and glutamine 154–arginine 158.

Belongs to the IPP transferase family. As to quaternary structure, monomer. The cofactor is Mg(2+).

It carries out the reaction adenosine(37) in tRNA + dimethylallyl diphosphate = N(6)-dimethylallyladenosine(37) in tRNA + diphosphate. Functionally, catalyzes the transfer of a dimethylallyl group onto the adenine at position 37 in tRNAs that read codons beginning with uridine, leading to the formation of N6-(dimethylallyl)adenosine (i(6)A). The polypeptide is tRNA dimethylallyltransferase 1 (Porphyromonas gingivalis (strain ATCC 33277 / DSM 20709 / CIP 103683 / JCM 12257 / NCTC 11834 / 2561)).